A 624-amino-acid polypeptide reads, in one-letter code: Kelch-like ECH-associated protein 1 (624 aa).

Residue cysteine 38 is modified to S-(2-succinyl)cysteine. Positions 77-149 (CDVTLQVKYQ…AYTASISMGE (73 aa)) constitute a BTB domain. An N5-[4-(S-L-cysteinyl)-5-methyl-1H-imidazol-2-yl]-L-ornithine (Arg-Cys) (interchain with C-151 in KEAP1) cross-link involves residue arginine 135. S-(2-succinyl)cysteine occurs at positions 151 and 241. The residue at position 151 (cysteine 151) is an S-(2,3-dicarboxypropyl)cysteine; alternate. Cysteine 151 bears the S-nitrosocysteine; alternate mark. Cysteine 151 participates in a covalent cross-link: N5-[4-(S-L-cysteinyl)-5-methyl-1H-imidazol-2-yl]-L-ornithine (Cys-Arg) (interchain with R-135 in KEAP1). Positions 184–286 (AIGIANFAEQ…TPNFLQMQLQ (103 aa)) constitute a BACK domain. S-(2,3-dicarboxypropyl)cysteine occurs at positions 257 and 273. Residues cysteine 288 and cysteine 319 each carry the S-(2-succinyl)cysteine modification. An S-(2,3-dicarboxypropyl)cysteine; alternate modification is found at cysteine 288. 6 Kelch repeats span residues 327–372 (LIYT…VVGG), 373–423 (LLYA…VIDG), 424–470 (HIYA…VLNR), 471–517 (LLYA…VLHN), 518–564 (CIYA…VHQG), and 565–611 (RIYV…VTME). Cysteine 434 carries the S-cGMP-cysteine modification. Position 613 is an S-(2-succinyl)cysteine (cysteine 613).

This sequence belongs to the KEAP1 family. As to quaternary structure, component of the BCR(KEAP1) E3 ubiquitin ligase complex, at least composed of 2 molecules of CUL3, 2 molecules of KEAP1, and RBX1. Interacts with NFE2L2/NRF2; the interaction is direct. Forms a ternary complex with NFE2L2/NRF2 and PGAM5. Interacts with (phosphorylated) SQSTM1/p62; the interaction is direct and inactivates the BCR(KEAP1) complex by sequestering it in inclusion bodies, promoting its degradation. Interacts with NFE2L1. Interacts with BPTF and PTMA. Interacts with MAP1LC3B. Interacts indirectly with ENC1. Interacts with SESN1 and SESN2. Interacts with HSP90AA1 and HSP90AB1. Interacts with PGCKA1; this interaction prevents the ubiquitination of KEAP1 by TRIM25, thus protecting KEAP1 from degradation. In terms of processing, non-enzymatic covalent modifications of reactive cysteines by electrophile metabolites inactivate the BCR(KEAP1) complex. Accumulation of fumarate promotes the formation of cysteine S-succination (S-(2-succinyl)cysteine), leading to inactivate the BCR(KEAP1) complex and promote NFE2L2/NRF2 nuclear accumulation and activation. Nitric oxide-dependent 8-Nitro-cGMP formation promotes cysteine guanylation (S-cGMP-cysteine), leading to NFE2L2/NRF2 nuclear accumulation and activation. Itaconate, an anti-inflammatory metabolite generated in response to lipopolysaccharide, alkylates cysteines, activating NFE2L2/NRF2. Methylglyoxal, a reactive metabolite that accumulates when the glycolytic enzyme PGK1 is inhibited, promotes formation of a methylimidazole cross-link between proximal Cys-151 and Arg-135 on another KEAP1 molecule, resulting in an inactive dimer that inactivates the BCR(KEAP1) complex. Degraded via a proteasomal-independent process during selective autophagy: interaction with phosphorylated SQSTM1/p62 sequesters KEAP1 in inclusion bodies, leading to its degradation. Post-translationally, auto-ubiquitinated by the BCR(KEAP1) complex. Quinone-induced oxidative stress, but not sulforaphane, increases its ubiquitination. Ubiquitination and subsequent degradation is most pronounced following prolonged exposure of cells to oxidative stress, particularly in glutathione-deficient cells that are highly susceptible to oxidative stress. Deubiquitinated by USP25; leading to stabilization. Ubiquitinated by TRIM25; leading to degradation upon ER stress.

The protein resides in the cytoplasm. Its subcellular location is the nucleus. Its pathway is protein modification; protein ubiquitination. Ubiquitin ligase activity of the BCR(KEAP1) complex is inhibited by oxidative stress and electrophile metabolites such as sulforaphane. Electrophile metabolites react with reactive cysteine residues in KEAP1 and trigger non-enzymatic covalent modifications of these cysteine residues, leading to inactivate the ubiquitin ligase activity of the BCR(KEAP1) complex. Selective autophagy also inactivates the BCR(KEAP1) complex via interaction between KEAP1 and SQSTM1/p62, which sequesters the complex in inclusion bodies and promotes its degradation. Substrate-specific adapter of a BCR (BTB-CUL3-RBX1) E3 ubiquitin ligase complex that regulates the response to oxidative stress by targeting NFE2L2/NRF2 for ubiquitination. KEAP1 acts as a key sensor of oxidative and electrophilic stress: in normal conditions, the BCR(KEAP1) complex mediates ubiquitination and degradation of NFE2L2/NRF2, a transcription factor regulating expression of many cytoprotective genes. In response to oxidative stress, different electrophile metabolites trigger non-enzymatic covalent modifications of highly reactive cysteine residues in KEAP1, leading to inactivate the ubiquitin ligase activity of the BCR(KEAP1) complex, promoting NFE2L2/NRF2 nuclear accumulation and expression of phase II detoxifying enzymes. In response to selective autophagy, KEAP1 is sequestered in inclusion bodies following its interaction with SQSTM1/p62, leading to inactivation of the BCR(KEAP1) complex and activation of NFE2L2/NRF2. The BCR(KEAP1) complex also mediates ubiquitination of SQSTM1/p62, increasing SQSTM1/p62 sequestering activity and degradation. The BCR(KEAP1) complex also targets BPTF and PGAM5 for ubiquitination and degradation by the proteasome. The polypeptide is Kelch-like ECH-associated protein 1 (Pongo abelii (Sumatran orangutan)).